The chain runs to 446 residues: 23S rRNA (uracil(1939)-C(5))-methyltransferase RlmD (446 aa).

A TRAM domain is found at 6–64 (KKLPQESITCEIESLSHEGRGVSHKDGKTLFVEGALPGETVTARYVNSRRSYDELAVEE). Residues Cys77, Cys83, Cys86, and Cys165 each coordinate [4Fe-4S] cluster. Residues Gln275, Phe304, Asn309, Glu325, Asp352, and Asp377 each contribute to the S-adenosyl-L-methionine site. The Nucleophile role is filled by Cys403.

The protein belongs to the class I-like SAM-binding methyltransferase superfamily. RNA M5U methyltransferase family. RlmD subfamily.

The enzyme catalyses uridine(1939) in 23S rRNA + S-adenosyl-L-methionine = 5-methyluridine(1939) in 23S rRNA + S-adenosyl-L-homocysteine + H(+). Its function is as follows. Catalyzes the formation of 5-methyl-uridine at position 1939 (m5U1939) in 23S rRNA. This Hahella chejuensis (strain KCTC 2396) protein is 23S rRNA (uracil(1939)-C(5))-methyltransferase RlmD.